We begin with the raw amino-acid sequence, 147 residues long: Hemoglobin subunit delta (147 aa).

Residues 3–147 form the Globin domain; sequence HLTADEKAAV…VAAALAHKYH (145 aa). The heme b site is built by histidine 64 and histidine 93.

It belongs to the globin family. Heterotetramer of two delta chains and two alpha chains. In terms of tissue distribution, red blood cells.

The protein is Hemoglobin subunit delta (HBD) of Carlito syrichta (Philippine tarsier).